The following is a 342-amino-acid chain: Phosphate acyltransferase (342 aa).

Belongs to the PlsX family. Homodimer. Probably interacts with PlsY.

Its subcellular location is the cytoplasm. The enzyme catalyses a fatty acyl-[ACP] + phosphate = an acyl phosphate + holo-[ACP]. The protein operates within lipid metabolism; phospholipid metabolism. In terms of biological role, catalyzes the reversible formation of acyl-phosphate (acyl-PO(4)) from acyl-[acyl-carrier-protein] (acyl-ACP). This enzyme utilizes acyl-ACP as fatty acyl donor, but not acyl-CoA. The chain is Phosphate acyltransferase from Shewanella halifaxensis (strain HAW-EB4).